The following is a 205-amino-acid chain: Regulator of G-protein signaling 4 (205 aa).

S-palmitoyl cysteine attachment occurs at residues C2, C12, and C95. An RGS domain is found at 62 to 178; that stretch reads SLENLINHEC…LKSRFYLDLT (117 aa).

In terms of processing, either Cys-2 or Cys-12 or both are palmitoylated. Post-translationally, phosphorylated by cyclic GMP-dependent protein kinase.

Inhibits signal transduction by increasing the GTPase activity of G protein alpha subunits thereby driving them into their inactive GDP-bound form. Activity on G(z)-alpha is inhibited by phosphorylation of the G-protein. Activity on G(z)-alpha and G(i)-alpha-1 is inhibited by palmitoylation of the G-protein. This chain is Regulator of G-protein signaling 4 (Rgs4), found in Rattus norvegicus (Rat).